A 91-amino-acid polypeptide reads, in one-letter code: Putative 26S proteasome complex subunit sem-1 (91 aa).

Residues 1–73 (MASTQPKNDA…SWDDDDTSDD (73 aa)) are disordered. The segment covering 8 to 28 (NDAKSTEPKPEQPVTEKKTAV) has biased composition (basic and acidic residues). 2 stretches are compositionally biased toward acidic residues: residues 29-48 (LEEDDEFEDFPVDDWEAEDT) and 63-72 (ESWDDDDTSD).

This sequence belongs to the DSS1/SEM1 family. Part of the 26S proteasome.

Its function is as follows. Subunit of the 26S proteasome which plays a role in ubiquitin-dependent proteolysis. The chain is Putative 26S proteasome complex subunit sem-1 (sem-1) from Neurospora crassa (strain ATCC 24698 / 74-OR23-1A / CBS 708.71 / DSM 1257 / FGSC 987).